Here is a 119-residue protein sequence, read N- to C-terminus: Large ribosomal subunit protein bL17 (119 aa).

The protein belongs to the bacterial ribosomal protein bL17 family. As to quaternary structure, part of the 50S ribosomal subunit. Contacts protein L32.

In Psychrobacter sp. (strain PRwf-1), this protein is Large ribosomal subunit protein bL17.